A 106-amino-acid polypeptide reads, in one-letter code: ATP-dependent Clp protease adapter protein ClpS (106 aa).

Belongs to the ClpS family. As to quaternary structure, binds to the N-terminal domain of the chaperone ClpA.

Functionally, involved in the modulation of the specificity of the ClpAP-mediated ATP-dependent protein degradation. The protein is ATP-dependent Clp protease adapter protein ClpS of Vibrio vulnificus (strain CMCP6).